Reading from the N-terminus, the 369-residue chain is MSGNTLGTLFTVTTFGESHGPAIGCVIDGCPPGMALTEADVQLELDRRKPGTSRHVTQRQEPDQVEILSGVFEGVTTGAPIALLIRNTDQRSKDYGNIAETFRPGHADYTYWQKYGVRDYRGGGRSSARLTAPVVGAGAIAKKWLCERFGVEVRGYMSALGEIEIPFVDWSHVRENPFFAPNADIVPQLEDYMDALRKDGDSIGARIDVVASGVPVGWGEPLFDRLDADIAHAMMGINAVKGVEIGAGFASVAQRGSVHGDELTPDGFVGNHAGGVLGGISTGQDITVSIAIKPTSSIRTPRRSITRAGEPAVVETFGRHDPCVGIRATPIAESMLALVLIDHALRHRAQCGDVSSATPRIAARAPDAQ.

NADP(+)-binding residues include arginine 48 and arginine 54. FMN-binding positions include 125-127 (RSS), 238-239 (NA), glycine 278, 293-297 (KPTSS), and arginine 319.

It belongs to the chorismate synthase family. As to quaternary structure, homotetramer. FMNH2 is required as a cofactor.

It catalyses the reaction 5-O-(1-carboxyvinyl)-3-phosphoshikimate = chorismate + phosphate. It functions in the pathway metabolic intermediate biosynthesis; chorismate biosynthesis; chorismate from D-erythrose 4-phosphate and phosphoenolpyruvate: step 7/7. Catalyzes the anti-1,4-elimination of the C-3 phosphate and the C-6 proR hydrogen from 5-enolpyruvylshikimate-3-phosphate (EPSP) to yield chorismate, which is the branch point compound that serves as the starting substrate for the three terminal pathways of aromatic amino acid biosynthesis. This reaction introduces a second double bond into the aromatic ring system. The chain is Chorismate synthase from Burkholderia mallei (strain NCTC 10229).